The chain runs to 344 residues: Adenosine kinase 1 (344 aa).

The active site involves Asp-299.

This sequence belongs to the carbohydrate kinase PfkB family. Interacts with the begomovirus AL2 protein and the curtovirus L2 protein. It depends on Mg(2+) as a cofactor. Widely expressed.

The catalysed reaction is adenosine + ATP = AMP + ADP + H(+). Its pathway is purine metabolism; AMP biosynthesis via salvage pathway; AMP from adenosine: step 1/1. With respect to regulation, inactivated by the begomovirus AL2 protein or the curtovirus L2 protein. In terms of biological role, ATP dependent phosphorylation of adenosine and other related nucleoside analogs to monophosphate derivatives. Essential to sustain methyl recycling. The protein is Adenosine kinase 1 of Arabidopsis thaliana (Mouse-ear cress).